A 287-amino-acid chain; its full sequence is Phosphatidylserine decarboxylase proenzyme (287 aa).

Residues Asp89, His146, and Ser252 each act as charge relay system; for autoendoproteolytic cleavage activity in the active site. Ser252 (schiff-base intermediate with substrate; via pyruvic acid; for decarboxylase activity) is an active-site residue. Ser252 is subject to Pyruvic acid (Ser); by autocatalysis.

The protein belongs to the phosphatidylserine decarboxylase family. PSD-B subfamily. Prokaryotic type I sub-subfamily. In terms of assembly, heterodimer of a large membrane-associated beta subunit and a small pyruvoyl-containing alpha subunit. Requires pyruvate as cofactor. In terms of processing, is synthesized initially as an inactive proenzyme. Formation of the active enzyme involves a self-maturation process in which the active site pyruvoyl group is generated from an internal serine residue via an autocatalytic post-translational modification. Two non-identical subunits are generated from the proenzyme in this reaction, and the pyruvate is formed at the N-terminus of the alpha chain, which is derived from the carboxyl end of the proenzyme. The autoendoproteolytic cleavage occurs by a canonical serine protease mechanism, in which the side chain hydroxyl group of the serine supplies its oxygen atom to form the C-terminus of the beta chain, while the remainder of the serine residue undergoes an oxidative deamination to produce ammonia and the pyruvoyl prosthetic group on the alpha chain. During this reaction, the Ser that is part of the protease active site of the proenzyme becomes the pyruvoyl prosthetic group, which constitutes an essential element of the active site of the mature decarboxylase.

It is found in the cell membrane. It catalyses the reaction a 1,2-diacyl-sn-glycero-3-phospho-L-serine + H(+) = a 1,2-diacyl-sn-glycero-3-phosphoethanolamine + CO2. It functions in the pathway phospholipid metabolism; phosphatidylethanolamine biosynthesis; phosphatidylethanolamine from CDP-diacylglycerol: step 2/2. Functionally, catalyzes the formation of phosphatidylethanolamine (PtdEtn) from phosphatidylserine (PtdSer). This Shewanella pealeana (strain ATCC 700345 / ANG-SQ1) protein is Phosphatidylserine decarboxylase proenzyme.